The following is a 342-amino-acid chain: uncharacterized protein (342 aa).

Belongs to the cycloisomerase 2 family.

This is an uncharacterized protein from Staphylococcus epidermidis (strain ATCC 12228 / FDA PCI 1200).